Reading from the N-terminus, the 161-residue chain is Protein-export protein SecB (161 aa).

It belongs to the SecB family. Homotetramer, a dimer of dimers. One homotetramer interacts with 1 SecA dimer.

The protein resides in the cytoplasm. Its function is as follows. One of the proteins required for the normal export of preproteins out of the cell cytoplasm. It is a molecular chaperone that binds to a subset of precursor proteins, maintaining them in a translocation-competent state. It also specifically binds to its receptor SecA. The chain is Protein-export protein SecB from Afipia carboxidovorans (strain ATCC 49405 / DSM 1227 / KCTC 32145 / OM5) (Oligotropha carboxidovorans).